The primary structure comprises 117 residues: Minor capsid protein VP2 (117 aa).

This sequence belongs to the lagovirus VP2 protein family. Homooligomer. The portal-like structure consists in 12 copies of VP2. Interacts with capsid protein VP1.

Its subcellular location is the virion. It is found in the host cytoplasm. Its function is as follows. Minor structural protein that forms a portal-like structure at a unique three-fold axis of symmetry, following binding to the host receptor. The channel formed by VP2 may allow the delivery of the viral genome through the host endosomal membrane. In Rabbit hemorrhagic disease virus (strain AST89) (Ra/LV/RHDV/AST89/1989/SP), this protein is Minor capsid protein VP2.